Consider the following 85-residue polypeptide: uncharacterized protein (85 aa).

The segment at 35–85 (SDKDAPFSTQALTRSKSKRKRSALPVANGLKKPTRSIKRPSRGERLSATTI) is disordered.

This is an uncharacterized protein from Pasteurella multocida (strain Pm70).